A 208-amino-acid chain; its full sequence is FMN-dependent NADH:quinone oxidoreductase (208 aa).

99–102 (MWNF) lines the FMN pocket.

The protein belongs to the azoreductase type 1 family. As to quaternary structure, homodimer. FMN serves as cofactor.

The enzyme catalyses 2 a quinone + NADH + H(+) = 2 a 1,4-benzosemiquinone + NAD(+). The catalysed reaction is N,N-dimethyl-1,4-phenylenediamine + anthranilate + 2 NAD(+) = 2-(4-dimethylaminophenyl)diazenylbenzoate + 2 NADH + 2 H(+). Quinone reductase that provides resistance to thiol-specific stress caused by electrophilic quinones. Functionally, also exhibits azoreductase activity. Catalyzes the reductive cleavage of the azo bond in aromatic azo compounds to the corresponding amines. This is FMN-dependent NADH:quinone oxidoreductase from Brevibacillus brevis (strain 47 / JCM 6285 / NBRC 100599).